The following is a 228-amino-acid chain: NAD(P)H-hydrate epimerase (228 aa).

The YjeF N-terminal domain occupies 10-214; that stretch reads AIDIDQELFN…DLERKYDLKI (205 aa). 58-62 is a (6S)-NADPHX binding site; it reads NNGGD. N59 and D123 together coordinate K(+). Residues 127 to 133 and D156 each bind (6S)-NADPHX; that span reads GFSFKPP. K(+) is bound at residue S159.

Belongs to the NnrE/AIBP family. Requires K(+) as cofactor.

The enzyme catalyses (6R)-NADHX = (6S)-NADHX. It carries out the reaction (6R)-NADPHX = (6S)-NADPHX. In terms of biological role, catalyzes the epimerization of the S- and R-forms of NAD(P)HX, a damaged form of NAD(P)H that is a result of enzymatic or heat-dependent hydration. This is a prerequisite for the S-specific NAD(P)H-hydrate dehydratase to allow the repair of both epimers of NAD(P)HX. The protein is NAD(P)H-hydrate epimerase of Pediculus humanus subsp. corporis (Body louse).